A 391-amino-acid chain; its full sequence is Lipid-A-disaccharide synthase (391 aa).

This sequence belongs to the LpxB family.

It catalyses the reaction a lipid X + a UDP-2-N,3-O-bis[(3R)-3-hydroxyacyl]-alpha-D-glucosamine = a lipid A disaccharide + UDP + H(+). It participates in bacterial outer membrane biogenesis; LPS lipid A biosynthesis. Functionally, condensation of UDP-2,3-diacylglucosamine and 2,3-diacylglucosamine-1-phosphate to form lipid A disaccharide, a precursor of lipid A, a phosphorylated glycolipid that anchors the lipopolysaccharide to the outer membrane of the cell. This Azoarcus sp. (strain BH72) protein is Lipid-A-disaccharide synthase.